The sequence spans 247 residues: Probable transcriptional regulatory protein GSU1074 (247 aa).

It belongs to the TACO1 family.

It localises to the cytoplasm. This Geobacter sulfurreducens (strain ATCC 51573 / DSM 12127 / PCA) protein is Probable transcriptional regulatory protein GSU1074.